A 368-amino-acid chain; its full sequence is MSKRDYYQVLGVPRTASEDDLKKAYRRCAMKYHPDRNPGDAAAEAAFKECKEAYEVLADTKKRKLYDTHGHAAFEHGVGSGNTPDMNDIFGDIFGNIFGGARASRRGADVGYMVELDLEEAVAGVERQIQIPTLVECTHCHGSGSEDGHVETCGTCRGSGQVRIQRGIFAMQQTCPHCGGRGVIIRNPCKVCNGAGRVEDHKTLSVKIPAGVDNGDRIRLSGEGEQGPDGVPPGDLYVEVRVREHPIFQRDGDDLHCEVPVRISQAALGDIVRVATLDGEAEIRIPAETQSGKLFRLRGKGVRSVRSRTEGDLYCRIVVETPVNLTAEQRKLLEQFEMTFAGEDARKHSPKSATFLDGVKSFWDRMTS.

In terms of domain architecture, J spans 5 to 70 (DYYQVLGVPR…KKRKLYDTHG (66 aa)). A CR-type zinc finger spans residues 124–201 (GVERQIQIPT…CNGAGRVEDH (78 aa)). C137, C140, C153, C156, C175, C178, C189, and C192 together coordinate Zn(2+). 4 CXXCXGXG motif repeats span residues 137–144 (CTHCHGSG), 153–160 (CGTCRGSG), 175–182 (CPHCGGRG), and 189–196 (CKVCNGAG).

This sequence belongs to the DnaJ family. As to quaternary structure, homodimer. Zn(2+) serves as cofactor.

The protein resides in the cytoplasm. In terms of biological role, participates actively in the response to hyperosmotic and heat shock by preventing the aggregation of stress-denatured proteins and by disaggregating proteins, also in an autonomous, DnaK-independent fashion. Unfolded proteins bind initially to DnaJ; upon interaction with the DnaJ-bound protein, DnaK hydrolyzes its bound ATP, resulting in the formation of a stable complex. GrpE releases ADP from DnaK; ATP binding to DnaK triggers the release of the substrate protein, thus completing the reaction cycle. Several rounds of ATP-dependent interactions between DnaJ, DnaK and GrpE are required for fully efficient folding. Also involved, together with DnaK and GrpE, in the DNA replication of plasmids through activation of initiation proteins. The chain is Chaperone protein DnaJ from Xylella fastidiosa (strain M23).